The following is a 364-amino-acid chain: DNA replication and repair protein RecF (364 aa).

30–37 provides a ligand contact to ATP; the sequence is GNNGQGKT.

It belongs to the RecF family.

Its subcellular location is the cytoplasm. Its function is as follows. The RecF protein is involved in DNA metabolism; it is required for DNA replication and normal SOS inducibility. RecF binds preferentially to single-stranded, linear DNA. It also seems to bind ATP. The sequence is that of DNA replication and repair protein RecF from Geotalea daltonii (strain DSM 22248 / JCM 15807 / FRC-32) (Geobacter daltonii).